The chain runs to 1169 residues: Flocculation protein FLO10 (1169 aa).

Positions 1-24 (MPVAARYIFLTGLFLLSVANVALG) are cleaved as a signal peptide. Positions 111–271 (PVKRGVKLCS…GTEVNDDFEG (161 aa)) constitute a PA14 domain. Asn122, Asn157, and Asn279 each carry an N-linked (GlcNAc...) asparagine glycan. 10 tandem repeats follow at residues 303–326 (SSWSSSEVCTECTETESTSYVTPY), 330–356 (SSWSSSEVCTECTETESTSTSTPYVTS), 357–383 (SSSSSSEVCTECTETESTSYVTPYVSS), 384–419 (STAAANYTSSFSSSSEVCTECTETESTSTSTPYVTS), 420–446 (SSWSSSEVCTECTETESTSYVTPYVSS), 447–482 (STAAANYTSSFSSSSEVCTECTETESTSTSTPYVTS), 483–509 (SSSSSSEVCTECTETESTSYVTPYVSS), 510–545 (STAAANYTSSFSSSSEVCTECTETESTSTSTPYVTS), 546–572 (SSWSSSEVCTECTETESTSYVTPYVSS), and 573–608 (STAAANYTSSFSSSSEVCTECTETESTSTSTPYATS). The segment at 303-572 (SSWSSSEVCT…TSYVTPYVSS (270 aa)) is 6 X 27 AA approximate repeats, Ser/Thr-rich. The 4 X 36 AA approximate repeats, Ser/Thr-rich stretch occupies residues 384 to 608 (STAAANYTSS…TSTSTPYATS (225 aa)). Residue Asn389 is glycosylated (N-linked (GlcNAc...) asparagine). N-linked (GlcNAc...) asparagine glycosylation occurs at Asn452. Asn515 is a glycosylation site (N-linked (GlcNAc...) asparagine). N-linked (GlcNAc...) asparagine glycans are attached at residues Asn578, Asn656, and Asn686. A compositionally biased stretch (low complexity) spans 798–819 (TKVSSSESSESHRTSPTTSSES). 3 disordered regions span residues 798-837 (TKVSSSESSESHRTSPTTSSESGIKSSGVEIESTSTSSFS), 856-920 (TPSS…SRDR), and 1070-1107 (RNNNFVPTSGTTSIETHTTTTSNASENSDNVSASEAVS). The segment covering 856–884 (TPSSPISTVAPRSTGLNSQTESTNSSKET) has biased composition (polar residues). The N-linked (GlcNAc...) asparagine glycan is linked to Asn879. The segment covering 886 to 902 (SSENSASVMPSSSATSP) has biased composition (low complexity). A compositionally biased stretch (polar residues) spans 906–916 (KVTSDETSSGF). Residues 1077–1107 (TSGTTSIETHTTTTSNASENSDNVSASEAVS) are compositionally biased toward low complexity. N-linked (GlcNAc...) asparagine glycosylation is found at Asn1092 and Asn1099. Gly1146 carries GPI-anchor amidated glycine lipidation. Residues 1147–1169 (IANHLLTNSGISIFIASLLLAIV) constitute a propeptide, removed in mature form.

Belongs to the flocculin family. In terms of processing, extensively O-glycosylated. The GPI-anchor is attached to the protein in the endoplasmic reticulum and serves to target the protein to the cell surface. There, the glucosamine-inositol phospholipid moiety is cleaved off and the GPI-modified mannoprotein is covalently attached via its lipidless GPI glycan remnant to the 1,6-beta-glucan of the outer cell wall layer.

The protein localises to the secreted. It localises to the cell wall. The protein resides in the membrane. Cell wall protein that participates directly in adhesive cell-cell interactions during yeast flocculation, a reversible, asexual and Ca(2+)-dependent process in which cells adhere to form aggregates (flocs) consisting of thousands of cells. The lectin-like protein sticks out of the cell wall of flocculent cells and selectively binds mannose residues in the cell walls of adjacent cells. Activity is inhibited by mannose, glucose, maltose and sucrose. Also involved in cell-substrate adhesion, haploid invasive growth and diploid pseudohyphae formation. The polypeptide is Flocculation protein FLO10 (FLO10) (Saccharomyces cerevisiae (strain ATCC 204508 / S288c) (Baker's yeast)).